The chain runs to 299 residues: Taste receptor type 2 member 45 (299 aa).

Met-1 is a topological domain (extracellular). A helical transmembrane segment spans residues 2 to 22 (ITFLPIIFSILVVVTFVIGNF). Topologically, residues 23–55 (ANGFIALVNSTEWVKRQKISFADQIVTALAVSR) are cytoplasmic. The chain crosses the membrane as a helical span at residues 56–76 (VGLLWVLLLNWYSTVLNPAFC). At 77 to 98 (SVELRTTAYNIWAVTGHFSNWP) the chain is on the extracellular side. Residues 99–119 (ATSLSIFYLLKIANFSNLIFL) traverse the membrane as a helical segment. The Cytoplasmic portion of the chain corresponds to 120–126 (RLKRRVK). Residues 127–147 (SVILVVLLGPLLFLACHLFVV) form a helical membrane-spanning segment. The Extracellular portion of the chain corresponds to 148-178 (NMNQIVWTKEYEGNMTWKIKLRRAMYLSDTT). N-linked (GlcNAc...) asparagine glycosylation occurs at Asn-161. A helical transmembrane segment spans residues 179–199 (VTMLANLVPFTVTLISFLLLV). The Cytoplasmic segment spans residues 200 to 229 (CSLCKHLKKMQLHGKGSQDPSTKVHIKVLQ). The chain crosses the membrane as a helical span at residues 230-250 (TVISFFLLRAIYFVSVIISVW). At 251–259 (SFKNLENKP) the chain is on the extracellular side. Residues 260–280 (VFMFCQAIGFSCSSAHPFILI) form a helical membrane-spanning segment. Residues 281 to 299 (WGNKKLKQTYLSVLWQMRY) are Cytoplasmic-facing.

It belongs to the G-protein coupled receptor T2R family. Expressed in subsets of taste receptor cells of the tongue and exclusively in gustducin-positive cells.

Its subcellular location is the membrane. In terms of biological role, receptor that may play a role in the perception of bitterness and is gustducin-linked. May play a role in sensing the chemical composition of the gastrointestinal content. The activity of this receptor may stimulate alpha gustducin, mediate PLC-beta-2 activation and lead to the gating of TRPM5. The chain is Taste receptor type 2 member 45 (TAS2R45) from Homo sapiens (Human).